Consider the following 241-residue polypeptide: High mobility group B protein 7 (241 aa).

Polar residues-rich tracts occupy residues 1–11 and 20–29; these read MAGPSTTSNAP and ETSSNTSTTL. Disordered regions lie at residues 1 to 30, 75 to 116, and 174 to 241; these read MAGPSTTSNAPKQRKRVEAETSSNTSTTLR, TQAE…NKPK, and EYNK…LDDY. Residues 77–90 show a composition bias toward basic and acidic residues; that stretch reads AEAKKKPAEKKKTT. A DNA-binding region (HMG box) is located at residues 115 to 183; that stretch reads PKRPLTAFFI…EYNKSLESND (69 aa). 2 stretches are compositionally biased toward acidic residues: residues 182 to 221 and 229 to 241; these read NDADEEEEDEEKQSDDVDDAEEKQVDDDDEVEEKEVENTD and GKEEEEEEILDDY.

The protein belongs to the HMGB family. Post-translationally, phosphorylated. Expressed at low levels in lateral roots, root tips, cotyledons, leaves and flowers (including pedicels, but excluding styles).

The protein resides in the nucleus. Functionally, binds preferentially double-stranded supercoiled DNA. Required for karyogamy during female gametophyte development, when the two polar nuclei fuse to form the diploid central cell nucleus. This chain is High mobility group B protein 7 (HMGB7), found in Arabidopsis thaliana (Mouse-ear cress).